A 131-amino-acid chain; its full sequence is Profilin-2 (131 aa).

It belongs to the profilin family. As to quaternary structure, occurs in many kinds of cells as a complex with monomeric actin in a 1:1 ratio.

The protein resides in the cytoplasm. Its subcellular location is the cytoskeleton. Its function is as follows. Binds to actin and affects the structure of the cytoskeleton. At high concentrations, profilin prevents the polymerization of actin, whereas it enhances it at low concentrations. By binding to PIP2, it inhibits the formation of IP3 and DG. This Solanum lycopersicum (Tomato) protein is Profilin-2.